The following is a 72-amino-acid chain: MAGYLNNIALNLEIVLKNKADSPEVSETLVTRICENLLLSKEVSFLKADGSVENFKLSDMEYEITNTEELPE.

In terms of assembly, homodimer.

The chain is SPbeta prophage-derived uncharacterized protein YopT (yopT) from Bacillus subtilis (strain 168).